Consider the following 417-residue polypeptide: Guanine nucleotide-exchange factor SEC12 (417 aa).

The Cytoplasmic portion of the chain corresponds to 1 to 388 (MGRRRGVELY…QLHLLPSRRS (388 aa)). Tyrosine 10 carries the post-translational modification 3'-nitrotyrosine. The disordered stretch occupies residues 101–135 (KGSKAEKSGSKEQGPRQRKGAPPAEKKSGAQVHPE). Residues 103–115 (SKAEKSGSKEQGP) show a composition bias toward basic and acidic residues. 3 WD repeats span residues 152 to 191 (SNEP…KVLE), 194 to 232 (AHEG…TQLQ), and 298 to 337 (CGHE…RLYY). The helical transmembrane segment at 389–409 (VPVWLLLLLCVGLIIVTILLL) threads the bilayer. At 410–417 (QTAFPGFL) the chain is on the lumenal side.

Interacts with SAR1B (GDP-bound form). Interacts with MIA2; recruits PREB to endoplasmic reticulum exit sites. Interacts with CIDEB; facilitating loading of SCAP-SREBP into COPII vesicles.

The protein localises to the endoplasmic reticulum membrane. It is found in the nucleus. Guanine nucleotide exchange factor (GEF) that regulates the assembly of the coat protein complex II/COPII in endoplasmic reticulum (ER) to Golgi vesicle-mediated transport. Selectively activates SAR1A and SAR1B by promoting the exchange of guanosine diphosphate (GDP) for guanosine triphosphate (GTP) in these small GTPases. In their activated GTP-bound state, SAR1A and SAR1B insert into the membrane of the endoplasmic reticulum where they recruit the remainder of the coat protein complex II/COPII which is responsible for both the sorting of proteins and the deformation and budding of membranes into vesicles destined to the Golgi. Its function is as follows. Was first identified based on its probable role in the regulation of pituitary gene transcription. Binds to the prolactin gene (PRL) promoter and seems to activate transcription. In Mus musculus (Mouse), this protein is Guanine nucleotide-exchange factor SEC12.